Here is a 475-residue protein sequence, read N- to C-terminus: Gamma-aminobutyric acid receptor subunit gamma-2 (475 aa).

The first 39 residues, 1–39 (MSSPNIWSTGSSVYSTPVFSQKMTVWILLLLSLYPGFTS), serve as a signal peptide directing secretion. Over 40–275 (QKSDDDYEDY…FDLSRRMGYF (236 aa)) the chain is Extracellular. N-linked (GlcNAc...) asparagine glycans are attached at residues Asn52 and Asn129. A disulfide bridge links Cys190 with Cys204. A glycan (N-linked (GlcNAc...) asparagine) is linked at Asn247. Residues 276–296 (TIQTYIPCTLIVVLSWVSFWI) form a helical membrane-spanning segment. Residues 297 to 302 (NKDAVP) are Cytoplasmic-facing. The helical transmembrane segment at 303–322 (ARTSLGITTVLTMTTLSTIA) threads the bilayer. The Extracellular segment spans residues 323–334 (RKSLPKVSYVTA). The chain crosses the membrane as a helical span at residues 335 to 359 (MDLFVSVCFIFVFSALVEYGTLHYF). The Cytoplasmic segment spans residues 360–451 (VSNRKPSKDK…IHIRIAKMDS (92 aa)). An interaction with GABARAP region spans residues 433–450 (RTGAWRHGRIHIRIAKMD). Residues 452 to 472 (YARIFFPTAFCLFNLVYWVSY) traverse the membrane as a helical segment. Residues 473–475 (LYL) lie on the Extracellular side of the membrane.

It belongs to the ligand-gated ion channel (TC 1.A.9) family. Gamma-aminobutyric acid receptor (TC 1.A.9.5) subfamily. GABRG2 sub-subfamily. As to quaternary structure, heteropentamer, formed by a combination of alpha (GABRA1-6), beta (GABRB1-3), gamma (GABRG1-3), delta (GABRD), epsilon (GABRE), rho (GABRR1-3), pi (GABRP) and theta (GABRQ) chains, each subunit exhibiting distinct physiological and pharmacological properties. Interacts with GABARAP. Interacts with KIF21B. Identified in a complex of 720 kDa composed of LHFPL4, NLGN2, GABRA1, GABRB2, GABRG2 and GABRB3. Interacts with LHFPL4. Interacts with SHISA7; interaction leads to the regulation of GABA(A) receptor trafficking, channel deactivation kinetics and pharmacology. In terms of processing, palmitoylated by ZDHHC3/GODZ; required for the accumulation of GABA(A) receptors at the postsynaptic membrane of inhibitory GABAergic synapses.

The protein resides in the postsynaptic cell membrane. It localises to the cell membrane. The protein localises to the cell projection. It is found in the dendrite. Its subcellular location is the cytoplasmic vesicle membrane. The enzyme catalyses chloride(in) = chloride(out). Its activity is regulated as follows. Allosterically activated by benzodiazepines. Activated by pentobarbital. Potentiated by etomidate, propofol, pregnanolone. Inhibited by the antagonist bicuculline. Inhibited by zinc ions. Potentiated by histamine. In terms of biological role, gamma subunit of the heteropentameric ligand-gated chloride channel gated by gamma-aminobutyric acid (GABA), a major inhibitory neurotransmitter in the brain. GABA-gated chloride channels, also named GABA(A) receptors (GABAAR), consist of five subunits arranged around a central pore and contain GABA active binding site(s) located at the alpha and beta subunit interface(s). When activated by GABA, GABAARs selectively allow the flow of chloride anions across the cell membrane down their electrochemical gradient. Gamma-2/GABRG2-containing GABAARs are found at both synaptic and extrasynaptic sites. Chloride influx into the postsynaptic neuron following GABAAR opening decreases the neuron ability to generate a new action potential, thereby reducing nerve transmission. GABAARs containing alpha-1 and beta-2 or -3 subunits exhibit synaptogenic activity; the gamma-2 subunit being necessary but not sufficient to induce rapid synaptic contacts formation. Extrasynaptic gamma-2-containing receptors contribute to the tonic GABAergic inhibition. GABAARs function also as histamine receptor where histamine binds at the interface of two neighboring beta subunits and potentiates GABA response in a gamma-2 subunit-controlled manner. The sequence is that of Gamma-aminobutyric acid receptor subunit gamma-2 from Homo sapiens (Human).